Consider the following 486-residue polypeptide: L-arabinose isomerase (486 aa).

Mn(2+) is bound by residues E299, E324, H341, and H440.

Belongs to the arabinose isomerase family. The cofactor is Mn(2+).

It carries out the reaction beta-L-arabinopyranose = L-ribulose. It functions in the pathway carbohydrate degradation; L-arabinose degradation via L-ribulose; D-xylulose 5-phosphate from L-arabinose (bacterial route): step 1/3. Its function is as follows. Catalyzes the conversion of L-arabinose to L-ribulose. The polypeptide is L-arabinose isomerase (Shouchella clausii (strain KSM-K16) (Alkalihalobacillus clausii)).